The chain runs to 228 residues: Protein-L-isoaspartate O-methyltransferase (228 aa).

Residue Ser-74 is part of the active site.

The protein belongs to the methyltransferase superfamily. L-isoaspartyl/D-aspartyl protein methyltransferase family.

The protein localises to the cytoplasm. The catalysed reaction is [protein]-L-isoaspartate + S-adenosyl-L-methionine = [protein]-L-isoaspartate alpha-methyl ester + S-adenosyl-L-homocysteine. In terms of biological role, catalyzes the methyl esterification of L-isoaspartyl residues in peptides and proteins that result from spontaneous decomposition of normal L-aspartyl and L-asparaginyl residues. It plays a role in the repair and/or degradation of damaged proteins. The chain is Protein-L-isoaspartate O-methyltransferase from Methylorubrum extorquens (strain PA1) (Methylobacterium extorquens).